A 192-amino-acid polypeptide reads, in one-letter code: 7-methyl-GTP pyrophosphatase (192 aa).

Asp-69 acts as the Proton acceptor in catalysis.

This sequence belongs to the Maf family. YceF subfamily. A divalent metal cation serves as cofactor.

The protein localises to the cytoplasm. It carries out the reaction N(7)-methyl-GTP + H2O = N(7)-methyl-GMP + diphosphate + H(+). In terms of biological role, nucleoside triphosphate pyrophosphatase that hydrolyzes 7-methyl-GTP (m(7)GTP). May have a dual role in cell division arrest and in preventing the incorporation of modified nucleotides into cellular nucleic acids. This Pseudomonas fluorescens (strain Pf0-1) protein is 7-methyl-GTP pyrophosphatase.